We begin with the raw amino-acid sequence, 99 residues long: Integration host factor subunit alpha (99 aa).

The protein belongs to the bacterial histone-like protein family. In terms of assembly, heterodimer of an alpha and a beta chain.

Its function is as follows. This protein is one of the two subunits of integration host factor, a specific DNA-binding protein that functions in genetic recombination as well as in transcriptional and translational control. This chain is Integration host factor subunit alpha (ihfA), found in Xylella fastidiosa (strain 9a5c).